A 202-amino-acid polypeptide reads, in one-letter code: Eukaryotic translation initiation factor isoform 4E (202 aa).

A disordered region spans residues 1 to 24 (MATEAPPPVDTTEVPPFTAAETAV). MRNA contacts are provided by residues 46–51 (QGAAWG), Lys78, and 96–97 (WE). A disulfide bond links Cys101 and Cys140. MRNA-binding positions include 147-152 (RRSQDK) and 191-194 (KRER).

This sequence belongs to the eukaryotic initiation factor 4E family. As to quaternary structure, EIF4F is a multi-subunit complex, the composition of which varies with external and internal environmental conditions. It is composed of at least EIF4A, EIF4E and EIF4G. EIF4E is also known to interact with other partners. In higher plants two isoforms of EIF4F have been identified, named isoform EIF4F and isoform EIF(iso)4F. Isoform EIF4F has subunits p220 and p26, whereas isoform EIF(iso)4F has subunits p82 and p28. (Microbial infection) Interacts with viral genome-linked protein (VPg); this interaction is possible in susceptible hosts but impaired in resistant plants. Post-translationally, according to the redox status, the Cys-101-Cys-140 disulfide bridge may have a role in regulating protein function by affecting its ability to bind capped mRNA.

The protein localises to the cytoplasm. Its subcellular location is the nucleus. In terms of biological role, component of the protein complex eIF4F, which is involved in the recognition of the mRNA cap, ATP-dependent unwinding of 5'-terminal secondary structure and recruitment of mRNA to the ribosome. Recognizes and binds the 7-methylguanosine-containing mRNA cap during an early step in the initiation of protein synthesis and facilitates ribosome binding by inducing the unwinding of the mRNAs secondary structures. Key component of recessive resistance to potyviruses. (Microbial infection) Susceptibility host factor required for viral infection by recruiting viral RNAs to the host ribosomal complex via an interaction with viral genome-linked protein (VPg). This Capsicum annuum (Capsicum pepper) protein is Eukaryotic translation initiation factor isoform 4E.